Here is a 550-residue protein sequence, read N- to C-terminus: Integral membrane protein DGCR2/IDD (550 aa).

The signal sequence occupies residues 1-20 (MVPKADSGAFLLLFLLVLTV). The Extracellular portion of the chain corresponds to 21 to 349 (TEPLRPELRC…LFDSMASGMR (329 aa)). Positions 28–68 (LRCNPGQFACRSGTIQCIPLPWQCDGWATCEDESDEANCPE) constitute an LDL-receptor class A domain. Intrachain disulfides connect Cys-30/Cys-44, Cys-37/Cys-57, and Cys-51/Cys-66. Residues 69-92 (VTGEVRPHHGKEAVDPRQGRARGG) form a disordered region. Basic and acidic residues predominate over residues 71 to 92 (GEVRPHHGKEAVDPRQGRARGG). Residues 115–241 (CPTGWHHYEG…FCAQLQCFHF (127 aa)) enclose the C-type lectin domain. 2 disulfide bridges follow: Cys-145/Cys-265 and Cys-233/Cys-257. N-linked (GlcNAc...) asparagine glycans are attached at residues Asn-149 and Asn-196. The 64-residue stretch at 270 to 333 (TCVDIKDNVV…PKECCKFMCL (64 aa)) folds into the VWFC domain. The helical transmembrane segment at 350–368 (LVVSCISSFLILSLLLFMV) threads the bilayer. The Cytoplasmic portion of the chain corresponds to 369 to 550 (HRLRQRRRER…HSRSSLNTVV (182 aa)). Position 381 is a phosphoserine (Ser-381). The interval 500 to 550 (AGASLADLEDSADSSSALLVPPDPAQSGSTPAAEALPGGGRHSRSSLNTVV) is disordered.

In terms of tissue distribution, predominantly expressed in brain, heart, lung and fetal kidney. Low levels in liver and adult kidney.

The protein resides in the membrane. Putative adhesion receptor, that could be involved in cell-cell or cell-matrix interactions required for normal cell differentiation and migration. This Homo sapiens (Human) protein is Integral membrane protein DGCR2/IDD (DGCR2).